Consider the following 440-residue polypeptide: Xaa-Pro dipeptidase (440 aa).

Residues aspartate 244, aspartate 255, histidine 336, glutamate 381, and glutamate 420 each contribute to the Mn(2+) site.

It belongs to the peptidase M24B family. Bacterial-type prolidase subfamily. Mn(2+) is required as a cofactor.

The catalysed reaction is Xaa-L-Pro dipeptide + H2O = an L-alpha-amino acid + L-proline. Its function is as follows. Splits dipeptides with a prolyl residue in the C-terminal position. In Pseudoalteromonas translucida (strain TAC 125), this protein is Xaa-Pro dipeptidase.